Consider the following 613-residue polypeptide: MTHITLGQAIWASVRPIIKIYLIIGVGFGLCKMNILTVQATRSISDIVLTILLPCLSFNKIVANIEDNDIKDVGIICLTSVILFATGLGFAFIVRSVLPVPKRWRGGILAGGMFPNISDLPIAYLQSMDQGFIFTEAEGEKGVANVIIFLAMFLICVFNLGGFRLIENDFHYKGDDDEENTLTNDDSAQQPTQPIEGNSSSSSNQDILKEPNESTVPNSSQASYISEKNKKEKTELSVPKPTHTAPPAIDDRSSNSSAVVSIDSITHSLRTNHVDAQSVSELNDPTYRTRSQPIAYTTESRTSHVHNNRRNSITGSLRSIDMRELPAEGMSDLIREYSNVDQYGRRRKSSISSQGAPSVLQADGTISPNLTRTSTLQRVKTSNLTRIITSDATVSKKDIETSGSSLPKWLQKFPLTKFFVFFLKNCLRPCSMAVILALIIAFIPWVKALFVTTSNTPKIKQAPDNAPALTFIMDFTSYVGAASVPFGLILLGATLGRLKIGKLYPGFWKSAVVLVFLRQCIMPIFGVLWCDRLVKAGWLNWENDKMLLFVTAITWNLPTMTTLIYFTASYTPEDETEPVQMECTSFFLMLQYPLMVVSLPFLVSYFIKVQMKL.

4 consecutive transmembrane segments (helical) span residues 10 to 30 (IWAS…GFGL), 74 to 94 (GIIC…AFIV), 106 to 126 (GGIL…AYLQ), and 143 to 163 (VANV…LGGF). Residues 177-256 (DEENTLTNDD…PAIDDRSSNS (80 aa)) form a disordered region. Composition is skewed to polar residues over residues 187–206 (SAQQ…SNQD) and 213–226 (ESTV…SYIS). Phosphoserine occurs at positions 291 and 338. Residues 345 to 366 (RRRKSSISSQGAPSVLQADGTI) are disordered. 4 helical membrane passes run 432–452 (MAVI…LFVT), 471–491 (FIMD…LILL), 546–566 (MLLF…LIYF), and 587–607 (FLML…SYFI).

Its subcellular location is the endoplasmic reticulum membrane. Its function is as follows. May be involved in cell wall organization and biogenesis. The polypeptide is Protein ECM3 (ECM3) (Saccharomyces cerevisiae (strain ATCC 204508 / S288c) (Baker's yeast)).